The following is a 218-amino-acid chain: Peptide methionine sulfoxide reductase MsrA (218 aa).

C57 is a catalytic residue.

This sequence belongs to the MsrA Met sulfoxide reductase family.

The catalysed reaction is L-methionyl-[protein] + [thioredoxin]-disulfide + H2O = L-methionyl-(S)-S-oxide-[protein] + [thioredoxin]-dithiol. It catalyses the reaction [thioredoxin]-disulfide + L-methionine + H2O = L-methionine (S)-S-oxide + [thioredoxin]-dithiol. Has an important function as a repair enzyme for proteins that have been inactivated by oxidation. Catalyzes the reversible oxidation-reduction of methionine sulfoxide in proteins to methionine. The polypeptide is Peptide methionine sulfoxide reductase MsrA (Brucella melitensis biotype 2 (strain ATCC 23457)).